The primary structure comprises 572 residues: Urease subunit alpha (572 aa).

The region spanning 134 to 572 (GGIDSHIHFI…LPMTQRYFLF (439 aa)) is the Urease domain. Ni(2+) is bound by residues H139, H141, and K222. K222 is subject to N6-carboxylysine. Residue H224 participates in substrate binding. Ni(2+)-binding residues include H251 and H277. H325 functions as the Proton donor in the catalytic mechanism. A Ni(2+)-binding site is contributed by D365.

The protein belongs to the metallo-dependent hydrolases superfamily. Urease alpha subunit family. Heterotrimer of UreA (gamma), UreB (beta) and UreC (alpha) subunits. Three heterotrimers associate to form the active enzyme. Requires Ni cation as cofactor. In terms of processing, carboxylation allows a single lysine to coordinate two nickel ions.

It is found in the cytoplasm. The enzyme catalyses urea + 2 H2O + H(+) = hydrogencarbonate + 2 NH4(+). Its pathway is nitrogen metabolism; urea degradation; CO(2) and NH(3) from urea (urease route): step 1/1. The protein is Urease subunit alpha of Polaromonas sp. (strain JS666 / ATCC BAA-500).